The primary structure comprises 82 residues: ATP synthase subunit c (82 aa).

A run of 2 helical transmembrane segments spans residues 7 to 27 and 53 to 73; these read FVALAAGLIIGLGAVGACIGI and FLLAGLIDAAFLIGVGIAMMF.

Belongs to the ATPase C chain family. F-type ATPases have 2 components, F(1) - the catalytic core - and F(0) - the membrane proton channel. F(1) has five subunits: alpha(3), beta(3), gamma(1), delta(1), epsilon(1). F(0) has three main subunits: a(1), b(2) and c(10-14). The alpha and beta chains form an alternating ring which encloses part of the gamma chain. F(1) is attached to F(0) by a central stalk formed by the gamma and epsilon chains, while a peripheral stalk is formed by the delta and b chains.

The protein resides in the cell inner membrane. Its function is as follows. F(1)F(0) ATP synthase produces ATP from ADP in the presence of a proton or sodium gradient. F-type ATPases consist of two structural domains, F(1) containing the extramembraneous catalytic core and F(0) containing the membrane proton channel, linked together by a central stalk and a peripheral stalk. During catalysis, ATP synthesis in the catalytic domain of F(1) is coupled via a rotary mechanism of the central stalk subunits to proton translocation. In terms of biological role, key component of the F(0) channel; it plays a direct role in translocation across the membrane. A homomeric c-ring of between 10-14 subunits forms the central stalk rotor element with the F(1) delta and epsilon subunits. In Polaromonas sp. (strain JS666 / ATCC BAA-500), this protein is ATP synthase subunit c.